Reading from the N-terminus, the 289-residue chain is 4-hydroxybenzoate octaprenyltransferase (289 aa).

The next 8 helical transmembrane spans lie at 23–43, 46–66, 99–119, 141–161, 163–183, 213–233, 234–254, and 268–288; these read IGAL…TPGV, LWIL…GCVV, LFVV…TMTI, LPQV…FAAV, ESVP…AVAY, LIIG…GWLN, GLGW…VYQQ, and AFMN…MSYV.

The protein belongs to the UbiA prenyltransferase family. Requires Mg(2+) as cofactor.

Its subcellular location is the cell inner membrane. The catalysed reaction is all-trans-octaprenyl diphosphate + 4-hydroxybenzoate = 4-hydroxy-3-(all-trans-octaprenyl)benzoate + diphosphate. It functions in the pathway cofactor biosynthesis; ubiquinone biosynthesis. In terms of biological role, catalyzes the prenylation of para-hydroxybenzoate (PHB) with an all-trans polyprenyl group. Mediates the second step in the final reaction sequence of ubiquinone-8 (UQ-8) biosynthesis, which is the condensation of the polyisoprenoid side chain with PHB, generating the first membrane-bound Q intermediate 3-octaprenyl-4-hydroxybenzoate. The chain is 4-hydroxybenzoate octaprenyltransferase from Citrobacter koseri (strain ATCC BAA-895 / CDC 4225-83 / SGSC4696).